A 254-amino-acid chain; its full sequence is Ribonuclease PH (254 aa).

Phosphate contacts are provided by residues arginine 86 and 124 to 126 (GTR).

Belongs to the RNase PH family. In terms of assembly, homohexameric ring arranged as a trimer of dimers.

The enzyme catalyses tRNA(n+1) + phosphate = tRNA(n) + a ribonucleoside 5'-diphosphate. In terms of biological role, phosphorolytic 3'-5' exoribonuclease that plays an important role in tRNA 3'-end maturation. Removes nucleotide residues following the 3'-CCA terminus of tRNAs; can also add nucleotides to the ends of RNA molecules by using nucleoside diphosphates as substrates, but this may not be physiologically important. Probably plays a role in initiation of 16S rRNA degradation (leading to ribosome degradation) during starvation. In Carboxydothermus hydrogenoformans (strain ATCC BAA-161 / DSM 6008 / Z-2901), this protein is Ribonuclease PH.